The following is a 205-amino-acid chain: MSKRETTKYKIDRRMGENIWGRPKSPVNRRDYGPGQHGQRRKGKLSDYGVQLRAKQKLKGFYGDISEKQFRKTYEEAARRRGDTGENLIGLLESRLDAVIYRAKFVPTIFASRQFINHGHVNVNGRRTNIQSYRCKPGDVIEVREKSKQLVLVLESVQLAERDVPEYIEADHNQMKATFVRIPAFADVPYAVQMEPNLVVEFYSR.

Positions 1-16 (MSKRETTKYKIDRRMG) are enriched in basic and acidic residues. Residues 1–46 (MSKRETTKYKIDRRMGENIWGRPKSPVNRRDYGPGQHGQRRKGKLS) are disordered. Positions 94 to 157 (SRLDAVIYRA…KQLVLVLESV (64 aa)) constitute an S4 RNA-binding domain.

Belongs to the universal ribosomal protein uS4 family. Part of the 30S ribosomal subunit. Contacts protein S5. The interaction surface between S4 and S5 is involved in control of translational fidelity.

In terms of biological role, one of the primary rRNA binding proteins, it binds directly to 16S rRNA where it nucleates assembly of the body of the 30S subunit. Functionally, with S5 and S12 plays an important role in translational accuracy. In Bartonella quintana (strain Toulouse) (Rochalimaea quintana), this protein is Small ribosomal subunit protein uS4.